We begin with the raw amino-acid sequence, 91 residues long: Small ribosomal subunit protein bS20 (91 aa).

It belongs to the bacterial ribosomal protein bS20 family.

Functionally, binds directly to 16S ribosomal RNA. This is Small ribosomal subunit protein bS20 from Mycoplasma mobile (strain ATCC 43663 / 163K / NCTC 11711) (Mesomycoplasma mobile).